A 330-amino-acid polypeptide reads, in one-letter code: Ribosomal RNA small subunit methyltransferase H (330 aa).

Residues 40–42, Asp-58, Phe-85, Asp-101, and Gln-108 each bind S-adenosyl-L-methionine; that span reads GGY.

The protein belongs to the methyltransferase superfamily. RsmH family.

The protein resides in the cytoplasm. It catalyses the reaction cytidine(1402) in 16S rRNA + S-adenosyl-L-methionine = N(4)-methylcytidine(1402) in 16S rRNA + S-adenosyl-L-homocysteine + H(+). Its function is as follows. Specifically methylates the N4 position of cytidine in position 1402 (C1402) of 16S rRNA. The chain is Ribosomal RNA small subunit methyltransferase H from Roseobacter denitrificans (strain ATCC 33942 / OCh 114) (Erythrobacter sp. (strain OCh 114)).